The chain runs to 395 residues: Zinc finger protein HD1 (395 aa).

The segment at Pro-30 to His-72 adopts a B box-type 1; atypical zinc-finger fold. Zn(2+) contacts are provided by Cys-35, Cys-38, Cys-58, His-63, Cys-78, Cys-81, Cys-101, and His-106. A B box-type 2; atypical zinc finger spans residues Glu-73 to Pro-117. Disordered stretches follow at residues Ser-147–Gly-176 and Gly-208–Glu-228. Over residues Asn-152–Asn-175 the composition is skewed to low complexity. Residues Arg-326–Arg-368 enclose the CCT domain.

The protein belongs to the CONSTANS family. In terms of assembly, interacts with HAL3 in the dark. In terms of processing, phosphorylated by OSK4 in the presence of HDR1.

It is found in the nucleus. In terms of biological role, probable transcription factor involved in the regulation of flower development. Required for the promotion of flowering under short day (SD) conditions and the suppression of flowering under long day (LD) conditions. Positively regulates the floral activator HEADING DATE 3a (HD3A) under SD and negatively under LD conditions. This chain is Zinc finger protein HD1, found in Oryza sativa subsp. japonica (Rice).